The sequence spans 545 residues: ATP synthase F(1) complex subunit alpha, mitochondrial (545 aa).

Residues Gln-216, Gly-218, Lys-219, Thr-220, and Ser-221 each contribute to the ATP site. Thr-220 contacts Mg(2+). Residue Asp-304 coordinates Mg(2+). 2 residues coordinate ATP: Gln-465 and Gln-467.

This sequence belongs to the ATPase alpha/beta chains family. Homotrimer. Component of the ATP synthase complex composed at least of ATP5F1A/subunit alpha, ATP5F1B/subunit beta, ATP5MC1/subunit c (homooctomer), MT-ATP6/subunit a, MT-ATP8/subunit 8, ATP5ME/subunit e, ATP5MF/subunit f, ATP5MG/subunit g, ATP5MK/subunit k, ATP5MJ/subunit j, ATP5F1C/subunit gamma, ATP5F1D/subunit delta, ATP5F1E/subunit epsilon, ATP5PF/subunit F6, ATP5PB/subunit b, ATP5PD/subunit d, ATP5PO/subunit OSCP. ATP synthase complex consists of a soluble F(1) head domain (subunits alpha(3) and beta(3)) - the catalytic core - and a membrane F(0) domain - the membrane proton channel (subunits c, a, 8, e, f, g, k and j). These two domains are linked by a central stalk (subunits gamma, delta, and epsilon) rotating inside the F1 region and a stationary peripheral stalk (subunits F6, b, d, and OSCP).

It localises to the mitochondrion inner membrane. Functionally, subunit alpha, of the mitochondrial membrane ATP synthase complex (F(1)F(0) ATP synthase or Complex V) that produces ATP from ADP in the presence of a proton gradient across the membrane which is generated by electron transport complexes of the respiratory chain. ATP synthase complex consist of a soluble F(1) head domain - the catalytic core - and a membrane F(1) domain - the membrane proton channel. These two domains are linked by a central stalk rotating inside the F(1) region and a stationary peripheral stalk. During catalysis, ATP synthesis in the catalytic domain of F(1) is coupled via a rotary mechanism of the central stalk subunits to proton translocation. In vivo, can only synthesize ATP although its ATP hydrolase activity can be activated artificially in vitro. With the catalytic subunit beta (ATP5F1B), forms the catalytic core in the F(1) domain. Subunit alpha does not bear the catalytic high-affinity ATP-binding sites. This is ATP synthase F(1) complex subunit alpha, mitochondrial from Xenopus laevis (African clawed frog).